We begin with the raw amino-acid sequence, 311 residues long: MQEIQKNTKKEQYNLNKLQKRLRRNVGEAIADFNMIEEGDRIMVCLSGGKDSYTMLEILRNLQQSAPINFSLVAVNLDQKQPGFPEHILPAYLEQLGVEYKIVEENTYGIVKEKIPEGKTTCSLCSRLRRGILYRTATELGATKIALGHHRDDILQTLFLNMFYGGKMKGMPPKLMSDDGKHIVIRPLAYCREKDIVRFAEAKAFPIIPCNLCGSQPNLQRQVIADMLRDWDKRYPGRIETMFSAMQNVVPSHLCDTNLFDFKGITHGSEVIDGGDLAFDREEIPLQPAGWQPEEDDTALEALRLDVIEVK.

The short motif at 47 to 52 (SGGKDS) is the PP-loop motif element. Residues C122, C125, and C213 each coordinate [4Fe-4S] cluster.

Belongs to the TtcA family. In terms of assembly, homodimer. The cofactor is Mg(2+). Requires [4Fe-4S] cluster as cofactor.

Its subcellular location is the cytoplasm. The catalysed reaction is cytidine(32) in tRNA + S-sulfanyl-L-cysteinyl-[cysteine desulfurase] + AH2 + ATP = 2-thiocytidine(32) in tRNA + L-cysteinyl-[cysteine desulfurase] + A + AMP + diphosphate + H(+). The protein operates within tRNA modification. Functionally, catalyzes the ATP-dependent 2-thiolation of cytidine in position 32 of tRNA, to form 2-thiocytidine (s(2)C32). The sulfur atoms are provided by the cysteine/cysteine desulfurase (IscS) system. This is tRNA-cytidine(32) 2-sulfurtransferase from Salmonella typhi.